The primary structure comprises 274 residues: 5'-3' exoribonuclease (274 aa).

Mn(2+)-binding residues include histidine 8, histidine 10, aspartate 15, histidine 40, glutamate 65, histidine 76, histidine 190, aspartate 247, and histidine 249.

The protein belongs to the PHP family. TrpH/YciV subfamily. The cofactor is Mn(2+).

It carries out the reaction a ribonucleoside 3',5'-bisphosphate + H2O = a ribonucleoside 5'-phosphate + phosphate. Its function is as follows. Efficiently catalyzes the hydrolysis of the 3'-phosphate from 3',5'-bis-phosphonucleotides as well as the successive hydrolysis of 5'-phosphomononucleotides from the 5'-end of short pieces of RNA and DNA, with no specificity toward the identity of the nucleotide base. Is more efficient at hydrolyzing RNA oligonucleotides than DNA oligonucleotides. This enzyme can also hydrolyze annealed DNA duplexes, albeit at a catalytic efficiency lower than that of the corresponding single-stranded oligonucleotides. This is 5'-3' exoribonuclease from Haemophilus influenzae (strain ATCC 51907 / DSM 11121 / KW20 / Rd).